The chain runs to 370 residues: Phosphoserine aminotransferase (370 aa).

Residue Arg-38 coordinates L-glutamate. Trp-101, Thr-143, Asp-166, and Gln-189 together coordinate pyridoxal 5'-phosphate. An N6-(pyridoxal phosphate)lysine modification is found at Lys-190. 243-244 (NT) contacts pyridoxal 5'-phosphate.

The protein belongs to the class-V pyridoxal-phosphate-dependent aminotransferase family. SerC subfamily. As to quaternary structure, homodimer. Pyridoxal 5'-phosphate serves as cofactor.

Its subcellular location is the cytoplasm. It catalyses the reaction O-phospho-L-serine + 2-oxoglutarate = 3-phosphooxypyruvate + L-glutamate. It carries out the reaction 4-(phosphooxy)-L-threonine + 2-oxoglutarate = (R)-3-hydroxy-2-oxo-4-phosphooxybutanoate + L-glutamate. The protein operates within amino-acid biosynthesis; L-serine biosynthesis; L-serine from 3-phospho-D-glycerate: step 2/3. It functions in the pathway cofactor biosynthesis; pyridoxine 5'-phosphate biosynthesis; pyridoxine 5'-phosphate from D-erythrose 4-phosphate: step 3/5. Its function is as follows. Catalyzes the reversible conversion of 3-phosphohydroxypyruvate to phosphoserine and of 3-hydroxy-2-oxo-4-phosphonooxybutanoate to phosphohydroxythreonine. The chain is Phosphoserine aminotransferase from Methanosarcina mazei (strain ATCC BAA-159 / DSM 3647 / Goe1 / Go1 / JCM 11833 / OCM 88) (Methanosarcina frisia).